We begin with the raw amino-acid sequence, 170 residues long: Calcineurin subunit B type 1 (170 aa).

EF-hand domains lie at 18 to 46, 50 to 85, 87 to 122, and 128 to 163; these read DEIR…FMSL, QQNP…FSVR, DKLS…MVGN, and QLQQ…TDIH. Asp-31, Asp-33, Ser-35, Glu-42, Asp-63, Asp-65, Asn-67, Glu-69, Glu-74, Asp-100, Asp-102, Asp-104, Tyr-106, Glu-111, Asp-141, Asp-143, Asp-145, Lys-147, and Glu-152 together coordinate Ca(2+).

It belongs to the calcineurin regulatory subunit family. As to quaternary structure, composed of two components (A and B), the A component is the catalytic subunit and the B component confers calcium sensitivity.

Functionally, calcineurin is a calcium-binding and calmodulin-binding protein found in all cells from yeast to mammals, and a calcium-dependent, calmodulin-stimulated protein phosphatase. This Drosophila melanogaster (Fruit fly) protein is Calcineurin subunit B type 1 (CanB).